A 280-amino-acid polypeptide reads, in one-letter code: ATP synthase subunit a (280 aa).

Transmembrane regions (helical) follow at residues 45–65 (AINV…LFLF), 105–125 (LVAP…LMDL), 126–146 (LPVD…LKVV), 159–179 (LSIF…GGFF), 190–210 (FLFP…PISL), 223–243 (MIFI…LFGG), and 250–270 (AVFH…LTIV).

It belongs to the ATPase A chain family. F-type ATPases have 2 components, CF(1) - the catalytic core - and CF(0) - the membrane proton channel. CF(1) has five subunits: alpha(3), beta(3), gamma(1), delta(1), epsilon(1). CF(0) has three main subunits: a(1), b(2) and c(9-12). The alpha and beta chains form an alternating ring which encloses part of the gamma chain. CF(1) is attached to CF(0) by a central stalk formed by the gamma and epsilon chains, while a peripheral stalk is formed by the delta and b chains.

The protein resides in the cell inner membrane. Key component of the proton channel; it plays a direct role in the translocation of protons across the membrane. The protein is ATP synthase subunit a of Thiobacillus denitrificans (strain ATCC 25259 / T1).